A 166-amino-acid chain; its full sequence is Phospholipase A2 inhibitor CgMIP-II (166 aa).

The first 19 residues, 1–19, serve as a signal peptide directing secretion; it reads MRLILLSGLLLLGTFLANG. Residues 46 to 161 form the C-type lectin domain; the sequence is LRYALMTVHN…CDDNLLVVCE (116 aa). Intrachain disulfides connect Cys-83–Cys-160 and Cys-138–Cys-152. Residue Asn-122 is glycosylated (N-linked (GlcNAc...) asparagine).

This sequence belongs to the alpha-type phospholipase A2 inhibitor family. As to quaternary structure, homomer composed of 20-25-kDa subunits that form oligomers of 180 kDa. In terms of processing, N-glycosylated. The glycosidic chain may contain superficial sialic acid residues. As to expression, expressed by the liver.

It localises to the secreted. Functionally, selectively inhibits the toxic properties of myotoxin-II from the same venom (AC P81165). Does not inhibit PLA2, anti-coagulant and lethal activities of the basic myotoxin I from the same venom (AC P0DQP6), nor the different crotoxin forms (heterodimer or subunit B alone). Does not block the enzymatic activity of crude acidic PLA2 fractions from the same venom. This is Phospholipase A2 inhibitor CgMIP-II from Cerrophidion godmani (Porthidium godmani).